The primary structure comprises 202 residues: Putative zinc finger protein ZK686.5 (202 aa).

The disordered stretch occupies residues 43-63 (RKNVDNTSTRKPYSYKDRKRK). 3 C2H2-type zinc fingers span residues 110-133 (TYCELCEQNFSSSKMLLLHRGKVH), 138-160 (IECHLCMKLFSQTIQFNRHMKTH), and 169-192 (VQCELCDRQFKDKQSLRTHWDVSH).

It is found in the nucleus. The chain is Putative zinc finger protein ZK686.5 from Caenorhabditis elegans.